The primary structure comprises 337 residues: Holliday junction branch migration complex subunit RuvB (337 aa).

The tract at residues methionine 1–valine 20 is disordered. The tract at residues methionine 1–tyrosine 181 is large ATPase domain (RuvB-L). Residues arginine 21, glycine 62, lysine 65, threonine 66, threonine 67, glutamate 128–tyrosine 130, arginine 171, tyrosine 181, and arginine 218 contribute to the ATP site. Threonine 66 lines the Mg(2+) pocket. The tract at residues aspartate 182–glycine 252 is small ATPAse domain (RuvB-S). The tract at residues glutamine 255–leucine 337 is head domain (RuvB-H). DNA-binding residues include arginine 310 and arginine 315.

It belongs to the RuvB family. As to quaternary structure, homohexamer. Forms an RuvA(8)-RuvB(12)-Holliday junction (HJ) complex. HJ DNA is sandwiched between 2 RuvA tetramers; dsDNA enters through RuvA and exits via RuvB. An RuvB hexamer assembles on each DNA strand where it exits the tetramer. Each RuvB hexamer is contacted by two RuvA subunits (via domain III) on 2 adjacent RuvB subunits; this complex drives branch migration. In the full resolvosome a probable DNA-RuvA(4)-RuvB(12)-RuvC(2) complex forms which resolves the HJ.

It localises to the cytoplasm. It catalyses the reaction ATP + H2O = ADP + phosphate + H(+). The RuvA-RuvB-RuvC complex processes Holliday junction (HJ) DNA during genetic recombination and DNA repair, while the RuvA-RuvB complex plays an important role in the rescue of blocked DNA replication forks via replication fork reversal (RFR). RuvA specifically binds to HJ cruciform DNA, conferring on it an open structure. The RuvB hexamer acts as an ATP-dependent pump, pulling dsDNA into and through the RuvAB complex. RuvB forms 2 homohexamers on either side of HJ DNA bound by 1 or 2 RuvA tetramers; 4 subunits per hexamer contact DNA at a time. Coordinated motions by a converter formed by DNA-disengaged RuvB subunits stimulates ATP hydrolysis and nucleotide exchange. Immobilization of the converter enables RuvB to convert the ATP-contained energy into a lever motion, pulling 2 nucleotides of DNA out of the RuvA tetramer per ATP hydrolyzed, thus driving DNA branch migration. The RuvB motors rotate together with the DNA substrate, which together with the progressing nucleotide cycle form the mechanistic basis for DNA recombination by continuous HJ branch migration. Branch migration allows RuvC to scan DNA until it finds its consensus sequence, where it cleaves and resolves cruciform DNA. The sequence is that of Holliday junction branch migration complex subunit RuvB from Methanospirillum hungatei JF-1 (strain ATCC 27890 / DSM 864 / NBRC 100397 / JF-1).